The following is a 383-amino-acid chain: Putative F-box protein At1g77650 (383 aa).

One can recognise an F-box domain in the interval 1 to 47 (MAFLSLPSDVVEEFLFKTPIESLVLCKPTCKQLYALCNDKRFIYNHL).

The protein is Putative F-box protein At1g77650 of Arabidopsis thaliana (Mouse-ear cress).